Reading from the N-terminus, the 359-residue chain is Phosphoserine aminotransferase (359 aa).

An L-glutamate-binding site is contributed by Arg41. Pyridoxal 5'-phosphate contacts are provided by residues 75-76 (AS), Trp101, Thr152, Asp171, and Gln194. Position 195 is an N6-(pyridoxal phosphate)lysine (Lys195). 236 to 237 (NT) contacts pyridoxal 5'-phosphate.

It belongs to the class-V pyridoxal-phosphate-dependent aminotransferase family. SerC subfamily. As to quaternary structure, homodimer. It depends on pyridoxal 5'-phosphate as a cofactor.

It localises to the cytoplasm. The catalysed reaction is O-phospho-L-serine + 2-oxoglutarate = 3-phosphooxypyruvate + L-glutamate. It carries out the reaction 4-(phosphooxy)-L-threonine + 2-oxoglutarate = (R)-3-hydroxy-2-oxo-4-phosphooxybutanoate + L-glutamate. It participates in amino-acid biosynthesis; L-serine biosynthesis; L-serine from 3-phospho-D-glycerate: step 2/3. It functions in the pathway cofactor biosynthesis; pyridoxine 5'-phosphate biosynthesis; pyridoxine 5'-phosphate from D-erythrose 4-phosphate: step 3/5. Functionally, catalyzes the reversible conversion of 3-phosphohydroxypyruvate to phosphoserine and of 3-hydroxy-2-oxo-4-phosphonooxybutanoate to phosphohydroxythreonine. The polypeptide is Phosphoserine aminotransferase (Acinetobacter baumannii (strain ACICU)).